The sequence spans 371 residues: Glutamate 5-kinase (371 aa).

An ATP-binding site is contributed by Lys-14. 3 residues coordinate substrate: Ser-54, Asp-141, and Asn-153. Position 173-174 (173-174) interacts with ATP; the sequence is TD. In terms of domain architecture, PUA spans 280 to 357; sequence AGDLILDDGA…TQIEKLLGYI (78 aa).

The protein belongs to the glutamate 5-kinase family.

It localises to the cytoplasm. The catalysed reaction is L-glutamate + ATP = L-glutamyl 5-phosphate + ADP. It functions in the pathway amino-acid biosynthesis; L-proline biosynthesis; L-glutamate 5-semialdehyde from L-glutamate: step 1/2. In terms of biological role, catalyzes the transfer of a phosphate group to glutamate to form L-glutamate 5-phosphate. In Aromatoleum aromaticum (strain DSM 19018 / LMG 30748 / EbN1) (Azoarcus sp. (strain EbN1)), this protein is Glutamate 5-kinase.